A 465-amino-acid chain; its full sequence is GTPase Der (465 aa).

EngA-type G domains follow at residues 3-167 (PLVA…PEEG) and 179-352 (IRIA…ESAN). GTP is bound by residues 9–16 (GRPNVGKS), 57–61 (DTGGI), 119–122 (NKID), 185–192 (GRPNVGKS), 232–236 (DTAGL), and 297–300 (NKWD). A KH-like domain is found at 353-437 (KTFTTSEVNK…PVSFIFREGT (85 aa)).

This sequence belongs to the TRAFAC class TrmE-Era-EngA-EngB-Septin-like GTPase superfamily. EngA (Der) GTPase family. Associates with the 50S ribosomal subunit.

In terms of biological role, GTPase that plays an essential role in the late steps of ribosome biogenesis. This is GTPase Der from Stenotrophomonas maltophilia (strain R551-3).